The following is a 143-amino-acid chain: MNAKKRKGSAVERNIVSRLRDKGFAVVRAPASGSKRKDPIPDIIALKNGVIILIEMKSRKDIEGKIYVRREQAEGIIEFARKSGGSLFLGVKKPGVLKFIPFEKLRRTETGNYVADSEIEGLDLEDLVRLVEAKISRTLDNFL.

Glu12 contributes to the Mg(2+) binding site. The active site involves Ser32. Positions 42 and 55 each coordinate Mg(2+).

This sequence belongs to the Holliday junction resolvase Hjc family. Homodimer. Interacts with PCNA subunit PCNA1. Requires Mg(2+) as cofactor.

It carries out the reaction Endonucleolytic cleavage at a junction such as a reciprocal single-stranded crossover between two homologous DNA duplexes (Holliday junction).. Its activity is regulated as follows. Autoinhibits at very high concentrations, possibly because of extreme junction distortion. Inhibition (and activity at low concentrations of enzyme) is stimulated by dsDNA and Sso7d. Activity stimulated by PCNA subunit PCNA1. In terms of biological role, a structure-specific endonuclease that resolves Holliday junction (HJ) intermediates during genetic recombination; may have some degree of sequence preference in a mobile junction. Cleaves 4-way DNA junctions introducing paired nicks in opposing strands, leaving a 5'-terminal phosphate and a 3'-terminal hydroxyl group that are subsequently ligated to produce recombinant products. Can cleave all 4 strands 3 bases 3' of the junction center. Cleaves both mobile and immobile junctions. Modifies the structure of the 4-way DNA junction, a model Holliday junction structure. The protein forms multiple complexes with 4-way DNA, suggesting more than 1 homodimer can bind to each junction. The polypeptide is Crossover junction endodeoxyribonuclease Hjc (Saccharolobus solfataricus (strain ATCC 35092 / DSM 1617 / JCM 11322 / P2) (Sulfolobus solfataricus)).